We begin with the raw amino-acid sequence, 331 residues long: N-arachidonyl glycine receptor (331 aa).

Residues 1–26 are Extracellular-facing; it reads MITLNNQDQPVPFNSSHPDEYKIAAL. Asparagine 14 carries an N-linked (GlcNAc...) asparagine glycan. Residues 27-47 form a helical membrane-spanning segment; the sequence is VFYSCIFIIGLFVNITALWVF. Over 48-56 the chain is Cytoplasmic; sequence SCTTKKRTT. A helical transmembrane segment spans residues 57–77; the sequence is VTIYMMNVALVDLIFIMTLPF. Over 78-95 the chain is Extracellular; it reads RMFYYAKDEWPFGEYFCQ. Cysteine 94 and cysteine 172 are joined by a disulfide. The chain crosses the membrane as a helical span at residues 96 to 116; the sequence is ILGALTVFYPSIALWLLAFIS. The Cytoplasmic segment spans residues 117–138; it reads ADRYMAIVQPKYAKELKNTCKA. A helical membrane pass occupies residues 139-159; it reads VLACVGVWIMTLTTTTPLLLL. Residues 160–191 are Extracellular-facing; sequence YKDPDKDSTPATCLKISDIIYLKAVNVLNLTR. A helical transmembrane segment spans residues 192 to 212; the sequence is LTFFFLIPLFIMIGCYLVIIH. Topologically, residues 213 to 232 are cytoplasmic; sequence NLLHGRTSKLKPKVKEKSIR. A helical membrane pass occupies residues 233–253; it reads IIITLLVQVLVCFMPFHICFA. At 254–268 the chain is on the extracellular side; sequence FLMLGTGENSYNPWG. The chain crosses the membrane as a helical span at residues 269-289; it reads AFTTFLMNLSTCLDVILYYIV. At 290 to 331 the chain is on the cytoplasmic side; the sequence is SKQFQARVISVMLYRNYLRSMRRKSFRSGSLRSLSNINSEML. Position 322 is a phosphoserine (serine 322).

The protein belongs to the G-protein coupled receptor 1 family. Expressed in midpiece of spermatozoon (at protein level). Most abundant in testis and spleen. Highly expressed in CD4 and CD8-positive T-cells as well as CD19-positive B-cells.

The protein resides in the cell membrane. Its subcellular location is the cytoplasmic vesicle membrane. Functionally, g protein-coupled receptor (GPCR) that plays a role in diverse physiological processes particularly within the immune and nervous systems. Becomes active when triggered by various endogenous ligands including endocannabinoid N-arachidonyl glycine (NAGly), delta-9-tetrahydrocannabinol or resolvin D2/RvD2 derived from the omega-3 fatty acid docosahexaenoic acid (DHA). Upon RvD2 binding, facilitates the resolution of inflammation, aiding in tissue repair and homeostasis. Mechanistically, RvD2 ligation initiates Galphas protein coupling, activation of cAMP-PKA signaling pathway and phosphorylation of STAT3, leading to RvD2-stimulated macrophage phagocytosis. Mediates NAGly-induced process of reorganization of actin filaments and induction of acrosomal exocytosis. Activation by N-arachidonoyl glycine (NAGly) can also induce apoptosis in macrophages. Plays a role in homeostasis of CD8+ subsets of intraepithelial lymphocytes (IELs) (CD8alphaalpha and CD8alphabeta IELs) in small intestine by supporting preferential migration of CD8alphaalpha T-cells to intraepithelial compartment over lamina propria compartment, and by mediating their reconstitution into small intestine after bone marrow transplant. Also participates in hypotensive responses, mediating reduction in intraocular and blood pressure. In Homo sapiens (Human), this protein is N-arachidonyl glycine receptor (GPR18).